A 44-amino-acid chain; its full sequence is Photosystem I reaction center subunit IX (44 aa).

Residues 7–27 traverse the membrane as a helical segment; it reads YLSVAPVVSTLWFGALAGLLI.

The protein belongs to the PsaJ family.

It localises to the plastid. The protein localises to the chloroplast thylakoid membrane. In terms of biological role, may help in the organization of the PsaE and PsaF subunits. In Glycine max (Soybean), this protein is Photosystem I reaction center subunit IX.